The primary structure comprises 268 residues: Eukaryotic translation initiation factor 3 subunit J (268 aa).

Disordered regions lie at residues 1-117 (MTPS…DLKH) and 219-242 (NEKMREERAADKGSKKSKAAKTKV). Positions 26 to 44 (DEEDEEVLDSWDAAEDSEV) are enriched in acidic residues. The stretch at 40 to 95 (EDSEVEREKAAKAAEAKAKAEAEAAAKKKSKAQRIEEHKAERRKNAEADSEEDEDE) forms a coiled coil. Basic and acidic residues-rich tracts occupy residues 45–65 (EREKAAKAAEAKAKAEAEAAA) and 72–86 (QRIEEHKAERRKNAE). A compositionally biased stretch (acidic residues) spans 87–99 (ADSEEDEDEDEDE). Basic and acidic residues-rich tracts occupy residues 100–117 (AEKRARLRRTEKDSDLKH) and 220–232 (EKMREERAADKGS).

The protein belongs to the eIF-3 subunit J family. In terms of assembly, component of the eukaryotic translation initiation factor 3 (eIF-3) complex.

Its subcellular location is the cytoplasm. In terms of biological role, component of the eukaryotic translation initiation factor 3 (eIF-3) complex, which is involved in protein synthesis of a specialized repertoire of mRNAs and, together with other initiation factors, stimulates binding of mRNA and methionyl-tRNAi to the 40S ribosome. The eIF-3 complex specifically targets and initiates translation of a subset of mRNAs involved in cell proliferation. The polypeptide is Eukaryotic translation initiation factor 3 subunit J (hcr1) (Aspergillus clavatus (strain ATCC 1007 / CBS 513.65 / DSM 816 / NCTC 3887 / NRRL 1 / QM 1276 / 107)).